The sequence spans 513 residues: Histidine ammonia-lyase (513 aa).

Residues 142-144 (ASG) constitute a cross-link (5-imidazolinone (Ala-Gly)). Ser143 carries the post-translational modification 2,3-didehydroalanine (Ser).

This sequence belongs to the PAL/histidase family. Post-translationally, contains an active site 4-methylidene-imidazol-5-one (MIO), which is formed autocatalytically by cyclization and dehydration of residues Ala-Ser-Gly.

The protein resides in the cytoplasm. It carries out the reaction L-histidine = trans-urocanate + NH4(+). Its pathway is amino-acid degradation; L-histidine degradation into L-glutamate; N-formimidoyl-L-glutamate from L-histidine: step 1/3. This chain is Histidine ammonia-lyase, found in Hyphomonas neptunium (strain ATCC 15444).